The following is an 89-amino-acid chain: MALTQERKREIIEQFKIHENDTGSPEVQVAILTEQINNLNEHLRIHKKDHHSRRGLLKMVGKRRNLLAYLRKKDVARYRELIEKLGLRR.

Belongs to the universal ribosomal protein uS15 family. In terms of assembly, part of the 30S ribosomal subunit. Forms a bridge to the 50S subunit in the 70S ribosome, contacting the 23S rRNA.

Functionally, one of the primary rRNA binding proteins, it binds directly to 16S rRNA where it helps nucleate assembly of the platform of the 30S subunit by binding and bridging several RNA helices of the 16S rRNA. Forms an intersubunit bridge (bridge B4) with the 23S rRNA of the 50S subunit in the ribosome. This chain is Small ribosomal subunit protein uS15, found in Geobacillus kaustophilus (strain HTA426).